A 228-amino-acid polypeptide reads, in one-letter code: Response regulator MprA (228 aa).

The Response regulatory domain occupies 2–116; that stretch reads RILAVDDDRA…ELLARIRALL (115 aa). Position 46 is a 4-aspartylphosphate (aspartate 46). The segment at residues 127–225 is a DNA-binding region (ompR/PhoB-type); that stretch reads SVAMSFSDLT…VRGVGYVLRE (99 aa).

Post-translationally, phosphorylated and dephosphorylated by MprB.

The protein localises to the cytoplasm. Its function is as follows. Member of the two-component regulatory system MprB/MprA which contributes to maintaining a balance among several systems involved in stress resistance and is required for establishment and maintenance of persistent infection in the host. Functions as a transcriptional regulator that recognizes a 19-bp nucleotide motif comprizing two loosely conserved 8-bp direct DNA-binding motif repeats separated by a 3-bp spacer region. In Mycobacterium leprae (strain TN), this protein is Response regulator MprA (mprA).